Reading from the N-terminus, the 254-residue chain is L-rhamnose 1-dehydrogenase (NADP(+)) (254 aa).

Gly13, Ser15, Arg16, Ile18, Asp64, and Asn91 together coordinate NADP(+). The active-site Proton donor is the Ser144. Residues Ser144, Ser146, Gln154, and Tyr157 each contribute to the beta-L-rhamnose site. NADP(+) is bound by residues Tyr157 and Lys161. Tyr157 serves as the catalytic Proton acceptor. Lys161 functions as the Lowers pKa of active site Tyr in the catalytic mechanism. Thr189 lines the beta-L-rhamnose pocket. NADP(+) is bound at residue Ile190. Beta-L-rhamnose is bound at residue Asn195.

Belongs to the short-chain dehydrogenases/reductases (SDR) family.

The catalysed reaction is L-rhamnofuranose + NADP(+) = L-rhamnono-1,4-lactone + NADPH + H(+). It participates in carbohydrate degradation; L-rhamnose degradation. In terms of biological role, involved in the non-phosphorylated metabolic pathway of L-rhamnose catabolism. Catalyzes the oxidation of L-rhamnose to yield L-rhamnono-1,4-lactone. It can also oxidize L-lyxose and L-mannose, and uses only NADP. This is L-rhamnose 1-dehydrogenase (NADP(+)) from Thermoplasma acidophilum (strain ATCC 25905 / DSM 1728 / JCM 9062 / NBRC 15155 / AMRC-C165).